The sequence spans 1683 residues: A-kinase anchor protein SPHKAP (1683 aa).

Polar residues-rich tracts occupy residues 1–14 and 289–301; these read MDVNSRLSVQSNVE and AENTALQSLNPSA. Disordered regions lie at residues 1–30, 275–320, and 582–601; these read MDVNSRLSVQSNVESPLMPEDSEPQQITSS, RMPS…ATNY, and LLPTPGASEERSSIGSLVTE. Residues 910–927 form a PKA-RII subunit binding domain region; sequence FAEELAETVVSMATEIAA. Positions 960 to 983 are disordered; sequence LKRKKENSGTGSTVRKHKPPRLSE. Phosphoserine occurs at positions 1006, 1066, 1088, 1101, 1102, 1105, 1240, and 1269. 2 disordered regions span residues 1359–1387 and 1415–1518; these read VTEGNCSPVSSPSKMAPVKKPSGFDPTRE and ETDQ…DTSS. Polar residues predominate over residues 1362–1371; sequence GNCSPVSSPS. Positions 1469 to 1490 are enriched in basic and acidic residues; that stretch reads LETREELEVDVLKEDITLDESR. Over residues 1492–1504 the composition is skewed to low complexity; the sequence is PPSSSEESTGSWS.

The protein belongs to the AKAP110 family. In terms of assembly, interacts (via the PKA-RII subunit binding domain) with the RI subunit of PKA. Interacts with SPHK1; the interaction greatly reduces SPHK1 activity. Abundant in heart ventricle (at protein level).

The protein resides in the cytoplasm. Functionally, anchoring protein that binds preferentially to the type I regulatory subunit of c-AMP-dependent protein kinase (PKA type I) and targets it to distinct subcellular compartments. May act as a converging factor linking cAMP and sphingosine signaling pathways. Plays a regulatory role in the modulation of SPHK1. In Rattus norvegicus (Rat), this protein is A-kinase anchor protein SPHKAP (Sphkap).